A 530-amino-acid polypeptide reads, in one-letter code: GMP synthase [glutamine-hydrolyzing] (530 aa).

The 202-residue stretch at 4–205 (RILILDYGSQ…VREICGCEGD (202 aa)) folds into the Glutamine amidotransferase type-1 domain. C84 (nucleophile) is an active-site residue. Catalysis depends on residues H179 and E181. The region spanning 206-398 (WNMPDYISEA…LGLPPQMVYR (193 aa)) is the GMPS ATP-PPase domain. 233-239 (SGGVDSS) lines the ATP pocket.

In terms of assembly, homodimer.

The catalysed reaction is XMP + L-glutamine + ATP + H2O = GMP + L-glutamate + AMP + diphosphate + 2 H(+). It participates in purine metabolism; GMP biosynthesis; GMP from XMP (L-Gln route): step 1/1. Functionally, catalyzes the synthesis of GMP from XMP. This chain is GMP synthase [glutamine-hydrolyzing], found in Bordetella avium (strain 197N).